A 263-amino-acid polypeptide reads, in one-letter code: MESSNQPNVLIFDSGVGGLSVFQEINKRLPEVNYYYLFDNQAYPYGELSQETLLARVEALVVKMTQQFAIDLVVIACNTASTIVLPALRAKLPIPVVGVVPAIKPASLLANRAVGLIATPATVTRQYTHDLIRDFAHEKEVELLGSTRLVDIAEEKLRGRQVDQQELAMILKPMKHKVDVAVLGCTHFPLLKEEIQQVLGDEIILVDSGEAIARRVQSLLHQLSPQSTKTPWRIFSTAQPWDEAALNGSLKTMGFNAIELYPL.

Substrate is bound by residues 13–14 (DS) and 45–46 (YG). Cys-77 (proton donor/acceptor) is an active-site residue. Position 78-79 (78-79 (NT)) interacts with substrate. The Proton donor/acceptor role is filled by Cys-185. Substrate is bound at residue 186–187 (TH).

This sequence belongs to the aspartate/glutamate racemases family.

It catalyses the reaction L-glutamate = D-glutamate. The protein operates within cell wall biogenesis; peptidoglycan biosynthesis. In terms of biological role, provides the (R)-glutamate required for cell wall biosynthesis. The polypeptide is Glutamate racemase (Vibrio vulnificus (strain YJ016)).